The primary structure comprises 456 residues: ATP-dependent protease ATPase subunit HslU (456 aa).

Residues Ile-18, 60-65 (GVGKTE), Asp-270, Glu-334, and Arg-406 each bind ATP.

The protein belongs to the ClpX chaperone family. HslU subfamily. A double ring-shaped homohexamer of HslV is capped on each side by a ring-shaped HslU homohexamer. The assembly of the HslU/HslV complex is dependent on binding of ATP.

The protein localises to the cytoplasm. In terms of biological role, ATPase subunit of a proteasome-like degradation complex; this subunit has chaperone activity. The binding of ATP and its subsequent hydrolysis by HslU are essential for unfolding of protein substrates subsequently hydrolyzed by HslV. HslU recognizes the N-terminal part of its protein substrates and unfolds these before they are guided to HslV for hydrolysis. The polypeptide is ATP-dependent protease ATPase subunit HslU (Exiguobacterium sibiricum (strain DSM 17290 / CCUG 55495 / CIP 109462 / JCM 13490 / 255-15)).